The sequence spans 245 residues: 1-(5-phosphoribosyl)-5-[(5-phosphoribosylamino)methylideneamino] imidazole-4-carboxamide isomerase (245 aa).

Aspartate 8 acts as the Proton acceptor in catalysis. Residue aspartate 131 is the Proton donor of the active site.

It belongs to the HisA/HisF family.

The protein localises to the cytoplasm. The catalysed reaction is 1-(5-phospho-beta-D-ribosyl)-5-[(5-phospho-beta-D-ribosylamino)methylideneamino]imidazole-4-carboxamide = 5-[(5-phospho-1-deoxy-D-ribulos-1-ylimino)methylamino]-1-(5-phospho-beta-D-ribosyl)imidazole-4-carboxamide. It participates in amino-acid biosynthesis; L-histidine biosynthesis; L-histidine from 5-phospho-alpha-D-ribose 1-diphosphate: step 4/9. The polypeptide is 1-(5-phosphoribosyl)-5-[(5-phosphoribosylamino)methylideneamino] imidazole-4-carboxamide isomerase (Neisseria gonorrhoeae (strain NCCP11945)).